Reading from the N-terminus, the 457-residue chain is MSNLAPEPEFQQAYNELVHSLRDQNSSRLPQILRLLCLSSPPERVIQFRVTWEDDKGNFQVNRGYRVQFNSALGPYKGGLRFHPTVNLSILKFLGFEQTFKNALTGLNMGGGKGGSDFDPKGKSDNEIRRFCYSFMRELSKHIGQFTDVPAGDIGVGGREIGYLFGAYESYKNQFEGVLTGKGITWGGSLIRPEATGYGLVYYVAHMISYASGGKETFAGKRVAISGSGNVAQYAALKVLELGGKVITLSDSKGALIATGEEGFNETDIELIAKLKLDRGYLTQLHAAEDSFKSRFKYLPGERPWCHVDKVDVALPSATQNEVSEQEAKELIASGCKFLAEGSNMGSTQEAINVYEEDRKSRKADGLWYGPAKAANCGGVAVSGLEMAQNSQRLTWTSEQVDKELAGIMERCFWNCLNPAKEYFDIAEGELPSLVAGANIAGYVKVVNAMKAQGDWW.

Lys113 is a catalytic residue.

The protein belongs to the Glu/Leu/Phe/Val dehydrogenases family. As to quaternary structure, homohexamer.

The catalysed reaction is L-glutamate + NADP(+) + H2O = 2-oxoglutarate + NH4(+) + NADPH + H(+). In Tuber borchii (White truffle), this protein is NADP-specific glutamate dehydrogenase (GDH).